Reading from the N-terminus, the 480-residue chain is MPAMVEKGPEVSGKRRGRNTAASAASAAASAASAAASAAASAGTASASAAAAASAAAAPNNGQNKSLAAAAPNGNSGSNSWEEGSSGSSSDEEHGGGGMRVGPQYQAAVPDFDPAKLARRSQERDNLGMLVWSPNQSLSEAKLDEYIAIAKEKHGYNMEQALGMLFWHKHNIEKSLADLPNFTPFPDEWTVEDKVLFEQAFSFHGKTFHRIQQMLPDKSIASLVKFYYSWKKTRTKTSVMDRHARKQKREREESEDELEETNGSNPVDIEIDPNKESKKEVPPTETVPQVKKEKHSTQAKNRAKRKPPKGMFLSQEDVEAVSANATAATTVLRQLDMELVSIKRQIQNIKQTNSALKEKLDGGIEPYRLPEVIQKCNARWTTEEQLLAVQAIRKYGRDFQAISDVIGNKSVVQVKNFFVNYRRRFNIDEVLQEWEAEHGKDETNGPANQKPVKSPESSIKIPEEEDEAASVLDVRYASAS.

Residues 1–105 (MPAMVEKGPE…GGGMRVGPQY (105 aa)) form a disordered region. Low complexity-rich tracts occupy residues 21-58 (AASA…AAAA) and 66-89 (SLAA…SGSS). Residues 72–251 (PNGNSGSNSW…RHARKQKRER (180 aa)) form an interaction with HDAC1 region. One can recognise an ELM2 domain in the interval 97–183 (GGMRVGPQYQ…KSLADLPNFT (87 aa)). Lys-116 participates in a covalent cross-link: Glycyl lysine isopeptide (Lys-Gly) (interchain with G-Cter in SUMO2). A Phosphoserine modification is found at Ser-121. The 52-residue stretch at 184-235 (PFPDEWTVEDKVLFEQAFSFHGKTFHRIQQMLPDKSIASLVKFYYSWKKTRT) folds into the SANT 1 domain. Positions 238-265 (SVMDRHARKQKREREESEDELEETNGSN) form a coiled coil. A disordered region spans residues 238 to 308 (SVMDRHARKQ…AKNRAKRKPP (71 aa)). Ser-254 carries the post-translational modification Phosphoserine. Positions 272-282 (DPNKESKKEVP) are enriched in basic and acidic residues. The interval 290-378 (VKKEKHSTQA…LPEVIQKCNA (89 aa)) is interaction with KDM1A. A Glycyl lysine isopeptide (Lys-Gly) (interchain with G-Cter in SUMO2) cross-link involves residue Lys-291. Residues 328 to 363 (ATTVLRQLDMELVSIKRQIQNIKQTNSALKEKLDGG) adopt a coiled-coil conformation. The SANT 2 domain occupies 375 to 426 (KCNARWTTEEQLLAVQAIRKYGRDFQAISDVIGNKSVVQVKNFFVNYRRRFN). The tract at residues 436–466 (AEHGKDETNGPANQKPVKSPESSIKIPEEED) is disordered. Ser-454 is subject to Phosphoserine. Residue Lys-460 forms a Glycyl lysine isopeptide (Lys-Gly) (interchain with G-Cter in SUMO2) linkage.

Belongs to the CoREST family. Component of a BHC histone deacetylase complex that contains HDAC1, HDAC2, HMG20B/BRAF35, KDM1A, RCOR1/CoREST and PHF21A/BHC80. The BHC complex may also contain ZMYM2, ZNF217, ZMYM3, GSE1 and GTF2I. Interacts with REST. Interacts with the SMARCE1/BAF57, suggesting that the BHC complex may recruit the ATP-dependent chromatin-remodeling SWI-SNF complex. Interacts directly with GFI1 and GFI1B in a RCOR/GFI/KDM1A/HDAC complex. Interacts with INMS1. Interacts with SOX2. In terms of tissue distribution, expressed in the external germinal layer (EGL) and internal granular layer (IGL) of the cerebellum and in Purkinje cells (at protein level).

Its subcellular location is the nucleus. Its function is as follows. Essential component of the BHC complex, a corepressor complex that represses transcription of neuron-specific genes in non-neuronal cells. The BHC complex is recruited at RE1/NRSE sites by REST and acts by deacetylating and demethylating specific sites on histones, thereby acting as a chromatin modifier. In the BHC complex, it serves as a molecular beacon for the recruitment of molecular machinery, including MeCP2 and SUV39H1, that imposes silencing across a chromosomal interval. Plays a central role in demethylation of Lys-4 of histone H3 by promoting demethylase activity of KDM1A on core histones and nucleosomal substrates. It also protects KDM1A from the proteasome. Component of a RCOR/GFI/KDM1A/HDAC complex that suppresses, via histone deacetylase (HDAC) recruitment, a number of genes implicated in multilineage blood cell development and controls hematopoietic differentiation. The polypeptide is REST corepressor 1 (Rcor1) (Mus musculus (Mouse)).